The sequence spans 1381 residues: Hepatocyte growth factor receptor (1381 aa).

Residues 1–24 form the signal peptide; sequence MKAPAVLAPGILVLLFTLVQRSNG. The Extracellular segment spans residues 25-934; the sequence is ECKEALTKSE…VQPDQNFTGL (910 aa). Positions 27–515 constitute a Sema domain; sequence KEALTKSEMN…TGKKITKIPL (489 aa). N-linked (GlcNAc...) asparagine glycosylation occurs at N45. 4 cysteine pairs are disulfide-bonded: C95-C101, C98-C160, C133-C141, and C172-C175. Residue N106 is glycosylated (N-linked (GlcNAc...) asparagine). N149 is a glycosylation site (N-linked (GlcNAc...) asparagine). N202 is a glycosylation site (N-linked (GlcNAc...) asparagine). 2 disulfide bridges follow: C298/C363 and C385/C397. N399 is a glycosylation site (N-linked (GlcNAc...) asparagine). 4 disulfide bridges follow: C520–C538, C526–C561, C529–C545, and C541–C551. IPT/TIG domains follow at residues 563-655, 657-739, and 742-836; these read PTIY…FSYV, PIIT…FSYR, and PIVY…LIYV. T582 is a glycosylation site (O-linked (Man) threonine). N607 and N635 each carry an N-linked (GlcNAc...) asparagine glycan. 2 O-linked (Man) threonine glycosylation sites follow: T676 and T761. N-linked (GlcNAc...) asparagine glycans are attached at residues N785, N879, and N930. Residues 935 to 955 form a helical membrane-spanning segment; the sequence is VAGVVSISIALLLLLGLFLWL. The Cytoplasmic portion of the chain corresponds to 956–1381; sequence KKKKQIKDLG…QDNTDGEVDT (426 aa). The residue at position 966 (S966) is a Phosphoserine. T977 bears the Phosphothreonine mark. S990, S997, and S1000 each carry phosphoserine. A Phosphotyrosine modification is found at Y1003. A Protein kinase domain is found at 1078–1345; the sequence is VHFNEVIGRG…RISAIFSTFI (268 aa). ATP-binding positions include 1084–1092 and K1110; that span reads IGRGHFGCV. D1204 functions as the Proton acceptor in the catalytic mechanism. The interval 1212 to 1381 is interaction with RANBP9; the sequence is LDEKFTVKVA…QDNTDGEVDT (170 aa). Y1230 bears the Phosphotyrosine mark. Phosphotyrosine; by autocatalysis occurs at positions 1234 and 1235. The residue at position 1289 (T1289) is a Phosphothreonine. The interval 1320–1359 is interaction with MUC20; it reads WHPKAEMRPSFSELVSRISAIFSTFIGEHYVHVNATYVNV. Phosphotyrosine; by autocatalysis occurs at positions 1349 and 1356. Position 1365 is a phosphotyrosine (Y1365).

Belongs to the protein kinase superfamily. Tyr protein kinase family. Heterodimer made of an alpha chain (50 kDa) and a beta chain (145 kDa) which are disulfide linked. Binds PLXNB1. Interacts when phosphorylated with downstream effectors including STAT3, PIK3R1, SRC, PCLG1, GRB2 and GAB1. Interacts with SPSB1, SPSB2 and SPSB4. Interacts with INPP5D/SHIP1. When phosphorylated at Tyr-1356, interacts with INPPL1/SHIP2. Interacts with RANBP9 and RANBP10, as well as SPSB1, SPSB2, SPSB3 and SPSB4. SPSB1 binding occurs in the presence and in the absence of HGF, however HGF treatment has a positive effect on this interaction. Interacts with MUC20; prevents interaction with GRB2 and suppresses hepatocyte growth factor-induced cell proliferation. Interacts with GRB10. Interacts with PTPN1 and PTPN2. Interacts with HSP90AA1 and HSP90AB1; the interaction suppresses MET kinase activity. Interacts with tensin TNS3. Interacts (when phosphorylated) with tensin TNS4 (via SH2 domain); the interaction increases MET protein stability by inhibiting MET endocytosis and subsequent lysosomal degradation. Post-translationally, autophosphorylated in response to ligand binding on Tyr-1234 and Tyr-1235 in the kinase domain leading to further phosphorylation of Tyr-1349 and Tyr-1356 in the C-terminal multifunctional docking site. Dephosphorylated by PTPRJ at Tyr-1349 and Tyr-1365. Dephosphorylated by PTPN1 and PTPN2. In terms of processing, ubiquitinated. Ubiquitination by CBL regulates the receptor stability and activity through proteasomal degradation. O-mannosylation of IPT/TIG domains by TMEM260 is required for protein maturation. O-mannosylated residues are composed of single mannose glycans that are not elongated or modified.

It is found in the membrane. It carries out the reaction L-tyrosyl-[protein] + ATP = O-phospho-L-tyrosyl-[protein] + ADP + H(+). Its function is as follows. Receptor tyrosine kinase that transduces signals from the extracellular matrix into the cytoplasm by binding to hepatocyte growth factor/HGF ligand. Regulates many physiological processes including proliferation, scattering, morphogenesis and survival. Ligand binding at the cell surface induces autophosphorylation of MET on its intracellular domain that provides docking sites for downstream signaling molecules. Following activation by ligand, interacts with the PI3-kinase subunit PIK3R1, PLCG1, SRC, GRB2, STAT3 or the adapter GAB1. Recruitment of these downstream effectors by MET leads to the activation of several signaling cascades including the RAS-ERK, PI3 kinase-AKT, or PLCgamma-PKC. The RAS-ERK activation is associated with the morphogenetic effects while PI3K/AKT coordinates prosurvival effects. During embryonic development, MET signaling plays a role in gastrulation, development and migration of muscles and neuronal precursors, angiogenesis and kidney formation. In adults, participates in wound healing as well as organ regeneration and tissue remodeling. Also promotes differentiation and proliferation of hematopoietic cells. The chain is Hepatocyte growth factor receptor (MET) from Callithrix jacchus (White-tufted-ear marmoset).